A 714-amino-acid chain; its full sequence is Centromere/kinetochore protein zw10 (714 aa).

Belongs to the ZW10 family.

It localises to the cytoplasm. Its subcellular location is the nucleus. It is found in the chromosome. The protein resides in the centromere. The protein localises to the kinetochore. Its function is as follows. Required for accurate chromosome segregation. This is Centromere/kinetochore protein zw10 (mit(1)15) from Drosophila grimshawi (Hawaiian fruit fly).